Reading from the N-terminus, the 549-residue chain is MAADVHKKKGWEVPNGSLAPGDGQHAERSESPTPGLAQGTEPGAGQEGAMFVHTRSYEDLTSPEDGGAVVRSPEERRGEPAEPTSMEQISKDFSELSTQLTGMALDLEEEMRQSQEGKLEPSPQATRHDSVLSGKEEEDVTMDTWRMHRKHVFVLSEAGKPVYSRYGSEEALSSTMGVMMALVSFLEAEKNAIRSIHADGYKVVFVRRSPLVLVAVARTRQSEQEIAHELLYIYYQILSLLTWTQLNHIFQQKQNYDLRRLLAGSERITDNLLDLMAHDPSFLMGAVRCLPLAASVRDAVSTSLQQAKAKSLVFSILLSGNQLVSLVRKKDQFLHPIDLHLLFNLISSSSSFREGEAWTPICLPKFNSSGFFHAHISYLEQEMDLCLLLVSTDREDFFTVSDCKRRFQERLRRRGVHHALQEALRTPFYSVAQVGIPDLRHFIYKSKSSGLFTSPEIEAPYVREEEKERLLGLYQYLHSRAHNSSCPLKNIYFTGPRENLLAWVTSAFELYICYSPLGTKAGAISAVNKLMKWIRKEEDRLFILTPQTY.

Disordered stretches follow at residues Met-1–Ser-90 and Glu-109–Glu-137. A compositionally biased stretch (basic and acidic residues) spans Glu-110–Leu-119.

The protein belongs to the MON1/SAND family.

Its function is as follows. Plays an important role in membrane trafficking through the secretory apparatus. Not involved in endocytic trafficking to lysosomes. This Gallus gallus (Chicken) protein is Vacuolar fusion protein MON1 homolog A (MON1A).